The primary structure comprises 211 residues: Endonuclease Htp3 (211 aa).

The first 20 residues, 1–20 (MLEVPVWIPILAFAVGLGLG), serve as a signal peptide directing secretion. Positions 48–51 (RTLR) match the RxLR motif. The TNase-like domain occupies 48–198 (RTLRGKVVSV…REKRVNIWSL (151 aa)). D77 contributes to the Ca(2+) binding site. Residue R90 is part of the active site. D95 is a Ca(2+) binding site. Active-site residues include E98 and R138. An N-linked (GlcNAc...) asparagine glycan is attached at N153. Positions 200-211 (KRETPAQYKARK) are binding to the host cell surface.

In the N-terminal section; belongs to the RxLR effector family. The protein in the C-terminal section; belongs to the LCL3 family. As to quaternary structure, interacts with the host cell surface endoplasmin gp96, in order to get translocated into to host cell. Interacts with the effector Htp1, in order to get released from vesicles into the host cytosol.

The protein localises to the secreted. The protein resides in the host cytoplasm. Its subcellular location is the host cytosol. Its activity is regulated as follows. The nuclease activity shows a general salt dependency with a clear reduction by magnesium and sulfate ions. Its function is as follows. Effector involved in the disease saprolegniosis in salmonids and other freshwater fish, resulting in considerable economic losses in aquaculture. Within the host fish cells, Htp3 is released from vesicles into host cytosol where it degrades nucleic acids. This chain is Endonuclease Htp3 (HTP3), found in Saprolegnia parasitica (strain CBS 223.65).